A 209-amino-acid polypeptide reads, in one-letter code: Nucleoside triphosphate pyrophosphatase (209 aa).

The Proton acceptor role is filled by Asp-79.

It belongs to the Maf family. A divalent metal cation serves as cofactor.

Its subcellular location is the cytoplasm. The enzyme catalyses a ribonucleoside 5'-triphosphate + H2O = a ribonucleoside 5'-phosphate + diphosphate + H(+). The catalysed reaction is a 2'-deoxyribonucleoside 5'-triphosphate + H2O = a 2'-deoxyribonucleoside 5'-phosphate + diphosphate + H(+). In terms of biological role, nucleoside triphosphate pyrophosphatase. May have a dual role in cell division arrest and in preventing the incorporation of modified nucleotides into cellular nucleic acids. The protein is Nucleoside triphosphate pyrophosphatase of Mycolicibacterium vanbaalenii (strain DSM 7251 / JCM 13017 / BCRC 16820 / KCTC 9966 / NRRL B-24157 / PYR-1) (Mycobacterium vanbaalenii).